A 211-amino-acid chain; its full sequence is Protein-L-isoaspartate O-methyltransferase (211 aa).

Ser-62 is an active-site residue.

It belongs to the methyltransferase superfamily. L-isoaspartyl/D-aspartyl protein methyltransferase family.

The protein resides in the cytoplasm. It carries out the reaction [protein]-L-isoaspartate + S-adenosyl-L-methionine = [protein]-L-isoaspartate alpha-methyl ester + S-adenosyl-L-homocysteine. In terms of biological role, catalyzes the methyl esterification of L-isoaspartyl residues in peptides and proteins that result from spontaneous decomposition of normal L-aspartyl and L-asparaginyl residues. It plays a role in the repair and/or degradation of damaged proteins. The sequence is that of Protein-L-isoaspartate O-methyltransferase from Shewanella frigidimarina (strain NCIMB 400).